Here is a 291-residue protein sequence, read N- to C-terminus: Ribosomal RNA small subunit methyltransferase A (291 aa).

Residues Asn-28, Leu-30, Gly-55, Glu-77, Asp-103, and Asn-123 each contribute to the S-adenosyl-L-methionine site.

Belongs to the class I-like SAM-binding methyltransferase superfamily. rRNA adenine N(6)-methyltransferase family. RsmA subfamily.

It localises to the cytoplasm. It catalyses the reaction adenosine(1518)/adenosine(1519) in 16S rRNA + 4 S-adenosyl-L-methionine = N(6)-dimethyladenosine(1518)/N(6)-dimethyladenosine(1519) in 16S rRNA + 4 S-adenosyl-L-homocysteine + 4 H(+). Specifically dimethylates two adjacent adenosines (A1518 and A1519) in the loop of a conserved hairpin near the 3'-end of 16S rRNA in the 30S particle. May play a critical role in biogenesis of 30S subunits. In Azorhizobium caulinodans (strain ATCC 43989 / DSM 5975 / JCM 20966 / LMG 6465 / NBRC 14845 / NCIMB 13405 / ORS 571), this protein is Ribosomal RNA small subunit methyltransferase A.